Consider the following 151-residue polypeptide: Ocs element-binding factor 1 (151 aa).

A compositionally biased stretch (polar residues) spans 1–17 (MSSSSLSPTAGRTSGSD). Positions 1–47 (MSSSSLSPTAGRTSGSDGDSAADTHRREKRRLSNRESARRSRLRKQQ) are disordered. Over residues 22–39 (ADTHRREKRRLSNRESAR) the composition is skewed to basic and acidic residues. In terms of domain architecture, bZIP spans 24–87 (THRREKRRLS…TRVEQENTVL (64 aa)). The tract at residues 26–45 (RREKRRLSNRESARRSRLRK) is basic motif. The leucine-zipper stretch occupies residues 52 to 59 (LVQEVARL).

This sequence belongs to the bZIP family. As to expression, roots and shoots of young plants, and basal portion of leaves.

It localises to the nucleus. In terms of biological role, may contribute to developmentally specific patterns of gene expression. Binds specifically to ocs elements which are transcriptional enhancer found in the promoters of several plant genes. OCSBF-1 is able to bind to a site within each half of the ocs element as well as to animal AP-1 and CREB sites. This chain is Ocs element-binding factor 1 (OBF1), found in Zea mays (Maize).